Reading from the N-terminus, the 217-residue chain is tRNA 5-hydroxyuridine methyltransferase (217 aa).

S-adenosyl-L-methionine-binding positions include M38, S68, E85, 113–114 (DA), and D133. Mg(2+) contacts are provided by D133, D159, and N160.

The protein belongs to the class I-like SAM-binding methyltransferase superfamily. Cation-dependent O-methyltransferase family. In terms of assembly, homodimer.

The enzyme catalyses 5-hydroxyuridine(34) in tRNA + S-adenosyl-L-methionine = 5-methoxyuridine(34) in tRNA + S-adenosyl-L-homocysteine + H(+). Functionally, catalyzes the methylation of 5-hydroxyuridine (ho5U) to form 5-methoxyuridine (mo5U) at position 34 in tRNAs. The chain is tRNA 5-hydroxyuridine methyltransferase from Bacillus subtilis (strain 168).